The primary structure comprises 562 residues: MFS-type efflux pump elcC (562 aa).

Transmembrane regions (helical) follow at residues 50–70 (WVFL…GAAP), 80–100 (VVAG…VAEF), 111–131 (GMLG…GGAF), 139–159 (LCFY…FLLV), 184–204 (LYGL…TQWG), 215–235 (IIAL…IEIW), 257–277 (IFSF…PLWF), 288–308 (SGIH…AAGG), 309–329 (MVFG…LAAV), 351–371 (VLYG…IQAA), and 383–403 (VVIF…QNVF). A glycan (N-linked (GlcNAc...) asparagine) is linked at Asn-448. The chain crosses the membrane as a helical span at residues 455–475 (FYVAVATAGLSMAGSILIPWL). The disordered stretch occupies residues 515–562 (EIASEDSQSSDIEKVPRNNEVSTYDSQTSEVEKSSVGSTNRKVESIRN). The span at 533 to 554 (NEVSTYDSQTSEVEKSSVGSTN) shows a compositional bias: polar residues.

The protein belongs to the major facilitator superfamily. TCR/Tet family.

It is found in the cell membrane. In terms of biological role, MFS-type efflux pump; part of the gene cluster that mediates the biosynthesis of elsinochrome C, a perelyenequinone phytotoxin structurally similar to cercosporin. The sequence is that of MFS-type efflux pump elcC from Phaeosphaeria nodorum (strain SN15 / ATCC MYA-4574 / FGSC 10173) (Glume blotch fungus).